A 332-amino-acid polypeptide reads, in one-letter code: Anthranilate phosphoribosyltransferase (332 aa).

5-phospho-alpha-D-ribose 1-diphosphate is bound by residues Gly78, 81–82 (GD), Thr86, 88–91 (NVST), 106–114 (KHGNRAASS), and Ala118. Gly78 is an anthranilate binding site. Ser90 contacts Mg(2+). Anthranilate is bound at residue Asn109. Arg164 lines the anthranilate pocket. Asp223 and Glu224 together coordinate Mg(2+).

The protein belongs to the anthranilate phosphoribosyltransferase family. In terms of assembly, homodimer. It depends on Mg(2+) as a cofactor.

It catalyses the reaction N-(5-phospho-beta-D-ribosyl)anthranilate + diphosphate = 5-phospho-alpha-D-ribose 1-diphosphate + anthranilate. The protein operates within amino-acid biosynthesis; L-tryptophan biosynthesis; L-tryptophan from chorismate: step 2/5. Its function is as follows. Catalyzes the transfer of the phosphoribosyl group of 5-phosphorylribose-1-pyrophosphate (PRPP) to anthranilate to yield N-(5'-phosphoribosyl)-anthranilate (PRA). The polypeptide is Anthranilate phosphoribosyltransferase (Sphingopyxis alaskensis (strain DSM 13593 / LMG 18877 / RB2256) (Sphingomonas alaskensis)).